A 536-amino-acid polypeptide reads, in one-letter code: Caspase A (536 aa).

A propeptide spans 1 to 273 (removed in mature form by autoprocessing); it reads MVLKTIEDNC…DSQSRMPRTD (273 aa). Residues His-364 and Cys-406 contribute to the active site.

The protein belongs to the peptidase C14A family. As to quaternary structure, heterodimer formed by the tight association of the large subunit p16 and the small subunit p14. In terms of processing, autocatalytic cleavage removes the propeptide and generates the two active subunits p16 and p14 in vitro. Cannot be cleaved by ced-3 in vitro. Isoform a: Expression is restricted to the late germline pachytene stage of meiosis I in both L4 larvae and adult hermaphrodite gonads. Isoform b: Expression is restricted to the late germline pachytene stage of meiosis I in both L4 larvae and adult hermaphrodite gonads.

It carries out the reaction Strict requirement for an Asp residue at position P1 and has a preferred cleavage sequence of Tyr-Val-Ala-Asp-|-.. Its activity is regulated as follows. Inhibited by cysteine protease inhibitor iodoacetic acid (CH3COOI) but not by N-[N-(L-3-transcarboxirane-2-carbonyl)-leucyl]-agmatine (E-64) or benzyloxycarbonyl-DEVD-fluoro-methyl ketone (Z-DEVD-FMK). Cysteine protease which, in vitro, cleaves itself and caspase ced-3 into their mature active forms. Also cleaves, in vitro, inactive caspase csp-2 isoform b. Required maternally to induce apoptosis in a subset of cells fated to die during embryogenesis, mostly independently of the ced-9, ced-4 and ced-3 canonical apoptosis pathway. Involved in the degeneration of dopaminergic CEP neurons in response to high Mn(2+) levels. Its function is as follows. Dispensable for regulating apoptosis during embryogenesis. The sequence is that of Caspase A from Caenorhabditis elegans.